Reading from the N-terminus, the 227-residue chain is MKHAEVPPPPEAAEAVFGPALEKAHLYARILAGAGVERGLLGPREVERLWDRHILNCAVVGELLQPGERVADIGSGAGLPGIPLALARPDVHVILIEPLLRRSEFLRETIEEIGIDCDVVRGRAEDRSVREEVGTTDVVVSRAVASLDKLTKWSSPLLRVGGRMLAIKGERADDEVQQHRRAMAALGVSEVKVERCGGQYVEPPATVVVGFQGVAKVSQSRSGRRHR.

Residues glycine 74, leucine 79, 124 to 125, and arginine 142 contribute to the S-adenosyl-L-methionine site; that span reads AE.

The protein belongs to the methyltransferase superfamily. RNA methyltransferase RsmG family.

Its subcellular location is the cytoplasm. In terms of biological role, specifically methylates the N7 position of guanine in position 518 of 16S rRNA. The sequence is that of Ribosomal RNA small subunit methyltransferase G from Mycolicibacterium vanbaalenii (strain DSM 7251 / JCM 13017 / BCRC 16820 / KCTC 9966 / NRRL B-24157 / PYR-1) (Mycobacterium vanbaalenii).